Reading from the N-terminus, the 383-residue chain is MTDSLSPTLELAVELIKRPSVTPHDAGCQELLSQRLQTIGFEITDLPFGEVQNFWARRGSQAPLVVFAGHTDVVPTGPEEKWEHPPFAAEVKDGVLHGRGAADMKGSLAAFMTACERFVKKHPNHRGSIGWLITSDEEGHAVNGTVKVVEYLVDKGEVIDWCIVGEPSSTHTVGDVIKNGRRGSIGATLIVKGVQGHVAYPHLADNPIHKAAPALAELANEKWDEGNAFFPATSLQISNINGGTGATNVIPGELNIMFNLRFSTELNADVIKQRSEAILQKHGLDYDIEWRLYGEPFLTSKGPLIEATQKAIKHVRGSDTTLSTSGGTSDGRFIAPTGAQVVELGPCNATIHRINEQVLVSEIDQLSSIYEHILEELLVVGSE.

A Zn(2+)-binding site is contributed by H70. Residue D72 is part of the active site. D103 is a Zn(2+) binding site. The Proton acceptor role is filled by E137. Zn(2+) contacts are provided by E138, E166, and H352.

This sequence belongs to the peptidase M20A family. DapE subfamily. As to quaternary structure, homodimer. The cofactor is Zn(2+). Co(2+) serves as cofactor.

The catalysed reaction is N-succinyl-(2S,6S)-2,6-diaminopimelate + H2O = (2S,6S)-2,6-diaminopimelate + succinate. It functions in the pathway amino-acid biosynthesis; L-lysine biosynthesis via DAP pathway; LL-2,6-diaminopimelate from (S)-tetrahydrodipicolinate (succinylase route): step 3/3. Its function is as follows. Catalyzes the hydrolysis of N-succinyl-L,L-diaminopimelic acid (SDAP), forming succinate and LL-2,6-diaminopimelate (DAP), an intermediate involved in the bacterial biosynthesis of lysine and meso-diaminopimelic acid, an essential component of bacterial cell walls. This chain is Succinyl-diaminopimelate desuccinylase, found in Hahella chejuensis (strain KCTC 2396).